Here is a 199-residue protein sequence, read N- to C-terminus: Recombination protein RecR (199 aa).

The segment at 58 to 73 (CKKCFNLTSEEECDIC) adopts a C4-type zinc-finger fold. The region spanning 81–175 (NIICVVAETK…KVTRIAYGLP (95 aa)) is the Toprim domain.

This sequence belongs to the RecR family.

In terms of biological role, may play a role in DNA repair. It seems to be involved in an RecBC-independent recombinational process of DNA repair. It may act with RecF and RecO. The chain is Recombination protein RecR from Prochlorococcus marinus (strain MIT 9515).